The sequence spans 169 residues: Protein-export protein SecB (169 aa).

It belongs to the SecB family. In terms of assembly, homotetramer, a dimer of dimers. One homotetramer interacts with 1 SecA dimer.

The protein localises to the cytoplasm. Its function is as follows. One of the proteins required for the normal export of preproteins out of the cell cytoplasm. It is a molecular chaperone that binds to a subset of precursor proteins, maintaining them in a translocation-competent state. It also specifically binds to its receptor SecA. This Alteromonas mediterranea (strain DSM 17117 / CIP 110805 / LMG 28347 / Deep ecotype) protein is Protein-export protein SecB.